The sequence spans 115 residues: Ribonuclease P protein component 4 (115 aa).

Zn(2+)-binding residues include C66, C69, C96, and C99.

This sequence belongs to the eukaryotic/archaeal RNase P protein component 4 family. Consists of a catalytic RNA component and at least 4-5 protein subunits. Zn(2+) is required as a cofactor.

It localises to the cytoplasm. It carries out the reaction Endonucleolytic cleavage of RNA, removing 5'-extranucleotides from tRNA precursor.. In terms of biological role, part of ribonuclease P, a protein complex that generates mature tRNA molecules by cleaving their 5'-ends. The protein is Ribonuclease P protein component 4 of Hyperthermus butylicus (strain DSM 5456 / JCM 9403 / PLM1-5).